A 308-amino-acid polypeptide reads, in one-letter code: UDP-N-acetylenolpyruvoylglucosamine reductase (308 aa).

The region spanning 33-197 is the FAD-binding PCMH-type domain; the sequence is TGGNADFYLS…LEASFNLAPG (165 aa). The active site involves Arg176. Ser226 acts as the Proton donor in catalysis. Glu296 is an active-site residue.

The protein belongs to the MurB family. FAD serves as cofactor.

The protein localises to the cytoplasm. The enzyme catalyses UDP-N-acetyl-alpha-D-muramate + NADP(+) = UDP-N-acetyl-3-O-(1-carboxyvinyl)-alpha-D-glucosamine + NADPH + H(+). It functions in the pathway cell wall biogenesis; peptidoglycan biosynthesis. In terms of biological role, cell wall formation. The polypeptide is UDP-N-acetylenolpyruvoylglucosamine reductase (Staphylococcus carnosus (strain TM300)).